Consider the following 105-residue polypeptide: Cell division protein FtsB (105 aa).

Residues 1-3 are Cytoplasmic-facing; that stretch reads MKP. Residues 4 to 21 form a helical membrane-spanning segment; sequence FVLVLFALLALLQYRLWF. Over 22–105 the chain is Periplasmic; that stretch reads GENSLTEYFT…RSSEQSQDNQ (84 aa). Positions 38–75 form a coiled coil; it reads HQQSGNAELLERNEVLKEEIQDLKSGTEALEERARNEL.

This sequence belongs to the FtsB family. In terms of assembly, part of a complex composed of FtsB, FtsL and FtsQ.

It localises to the cell inner membrane. Essential cell division protein. May link together the upstream cell division proteins, which are predominantly cytoplasmic, with the downstream cell division proteins, which are predominantly periplasmic. The protein is Cell division protein FtsB of Shewanella amazonensis (strain ATCC BAA-1098 / SB2B).